The chain runs to 533 residues: Nitrogen fixation protein AnfA (533 aa).

Residues 33 to 193 (ILYKISQIIT…PLVELYLIEN (161 aa)) form an a domain region. One can recognise a GAF domain in the interval 46–186 (DLADALSIVL…MIATMIAPLV (141 aa)). The Sigma-54 factor interaction domain maps to 219–448 (IIGNSKPMQE…LENVMERAVI (230 aa)). ATP contacts are provided by residues 247–254 (GESGVGKE) and 310–319 (ADGGTIFLDE). The H-T-H motif DNA-binding region spans 501 to 520 (IGEAAKELGLARRMLGVRME).

AnfA is essential for nitrogen fixation under Mo- and V-deficient conditions. It is required for the regulation of nitrogenase 3 transcription. Interacts with sigma-54. This chain is Nitrogen fixation protein AnfA (anfA), found in Azotobacter vinelandii.